The following is a 95-amino-acid chain: High mobility group nucleosome-binding domain-containing protein 3 (95 aa).

Basic and acidic residues-rich tracts occupy residues 1-25 (MPKR…EPTR), 39-53 (PEPK…KEPG), and 62-72 (GKKEEKQEAGK). The segment at 1–95 (MPKRKSPENA…EEVLSTNASH (95 aa)) is disordered. The residue at position 6 (serine 6) is a Phosphoserine. Phosphoserine is present on serine 78.

Belongs to the HMGN family. Interacts with the ligand binding domain of the thyroid receptor (TR) (in vitro). Requires the presence of thyroid hormone for its interaction. Interacts with transcriptional regulator SEHBP. Interacts with nucleosomes.

The protein resides in the nucleus. Functionally, binds to nucleosomes, regulating chromatin structure and consequently, chromatin-dependent processes such as transcription, DNA replication and DNA repair. Affects both insulin and glucagon levels and modulates the expression of pancreatic genes involved in insulin secretion. Regulates the expression of the glucose transporter SLC2A2 by binding specifically to its promoter region and recruiting PDX1 and additional transcription factors. Regulates the expression of SLC6A9, a glycine transporter which regulates the glycine concentration in synaptic junctions in the central nervous system, by binding to its transcription start site. May play a role in ocular development and astrocyte function. This is High mobility group nucleosome-binding domain-containing protein 3 (Hmgn3) from Rattus norvegicus (Rat).